A 157-amino-acid chain; its full sequence is ATP synthase subunit b' (157 aa).

A helical membrane pass occupies residues 22-42 (ATLPIIAVQFLLLVAVLNSLF).

Belongs to the ATPase B chain family. In terms of assembly, F-type ATPases have 2 components, F(1) - the catalytic core - and F(0) - the membrane proton channel. F(1) has five subunits: alpha(3), beta(3), gamma(1), delta(1), epsilon(1). F(0) has four main subunits: a(1), b(1), b'(1) and c(10-14). The alpha and beta chains form an alternating ring which encloses part of the gamma chain. F(1) is attached to F(0) by a central stalk formed by the gamma and epsilon chains, while a peripheral stalk is formed by the delta, b and b' chains.

It is found in the cellular thylakoid membrane. Functionally, f(1)F(0) ATP synthase produces ATP from ADP in the presence of a proton or sodium gradient. F-type ATPases consist of two structural domains, F(1) containing the extramembraneous catalytic core and F(0) containing the membrane proton channel, linked together by a central stalk and a peripheral stalk. During catalysis, ATP synthesis in the catalytic domain of F(1) is coupled via a rotary mechanism of the central stalk subunits to proton translocation. Component of the F(0) channel, it forms part of the peripheral stalk, linking F(1) to F(0). The b'-subunit is a diverged and duplicated form of b found in plants and photosynthetic bacteria. The polypeptide is ATP synthase subunit b' (Synechococcus sp. (strain JA-3-3Ab) (Cyanobacteria bacterium Yellowstone A-Prime)).